Reading from the N-terminus, the 219-residue chain is MGQKVNPCIFRTGPNLPRNWESVLYANKNNYSDFLLKILKIRKIINTEYSFAQITKILIEWPSSKNIVVNIYAKKIGVIIGKSGGDIEKLKQNIAKITSADVSINICEVKKPELEEAFIAQTIAQQLERRQSFKKVMKKAIHASMKQGAKGIKIICSGRLGGVEIARSESYKEGRVPLQTIRADIRYAFAEAITTYGVIGVKVWVYRCDVNQSRINEVK.

A KH type-2 domain is found at 41–110 (IRKIINTEYS…DVSINICEVK (70 aa)).

The protein belongs to the universal ribosomal protein uS3 family. In terms of assembly, part of the 30S ribosomal subunit. Forms a tight complex with proteins S10 and S14.

Functionally, binds the lower part of the 30S subunit head. Binds mRNA in the 70S ribosome, positioning it for translation. The sequence is that of Small ribosomal subunit protein uS3 from Orientia tsutsugamushi (strain Ikeda) (Rickettsia tsutsugamushi).